Reading from the N-terminus, the 479-residue chain is Anaerobic nitric oxide reductase flavorubredoxin (479 aa).

Residues 30-210 (LRGSSYNSYL…PFSRLVTPKI (181 aa)) are zinc metallo-hydrolase. The Fe cation site is built by His-79, Glu-81, Asp-83, His-147, Asp-166, and His-227. The Flavodoxin-like domain occupies 254-393 (ITIFYDTMSN…LCRQHGRDIA (140 aa)). FMN is bound by residues 260–264 (TMSNN) and 342–369 (AFGS…EMSL). Residues 423 to 474 (GPKMQCSVCQWIYDPALGEPLQDVAPGTPWSEVPDNFLCPECSLGKDVFDVL) enclose the Rubredoxin-like domain. Positions 428, 431, 461, and 464 each coordinate Fe cation.

In the N-terminal section; belongs to the zinc metallo-hydrolase group 3 family. Homotetramer. It depends on Fe cation as a cofactor. FMN serves as cofactor.

It is found in the cytoplasm. The protein operates within nitrogen metabolism; nitric oxide reduction. Its function is as follows. Anaerobic nitric oxide reductase; uses NADH to detoxify nitric oxide (NO), protecting several 4Fe-4S NO-sensitive enzymes. Has at least 2 reductase partners, only one of which (NorW, flavorubredoxin reductase) has been identified. NO probably binds to the di-iron center; electrons enter from the NorW at rubredoxin and are transferred sequentially to the FMN center and the di-iron center. Also able to function as an aerobic oxygen reductase. This chain is Anaerobic nitric oxide reductase flavorubredoxin, found in Salmonella paratyphi A (strain ATCC 9150 / SARB42).